We begin with the raw amino-acid sequence, 1175 residues long: Double-stranded RNA-specific adenosine deaminase (1175 aa).

2 positions are modified to asymmetric dimethylarginine: R30 and R42. Residues 135-201 (LSISQNPEQK…GKPPLWSLVP (67 aa)) enclose the Z-binding 1 domain. The interval 135 to 204 (LSISQNPEQK…PLWSLVPLSQ (70 aa)) is interaction with Z-DNA. The tract at residues 207 to 239 (TQPPRAVNSDKEVPRGEPDLDSEDGDPASDLEG) is disordered. Basic and acidic residues predominate over residues 214–224 (NSDKEVPRGEP). Acidic residues predominate over residues 225-235 (DLDSEDGDPAS). Phosphoserine occurs at positions 228 and 235. Positions 243–307 (LLDMAEIKEK…ATPPIWYLTD (65 aa)) constitute a Z-binding 2 domain. Residues 315 to 384 (MKRSTHSGPA…ARPGPVRLRP (70 aa)) form a disordered region. Residues 357–376 (KRVENGQEPVTKYESRHEAR) show a composition bias toward basic and acidic residues. K368 is covalently cross-linked (Glycyl lysine isopeptide (Lys-Gly) (interchain with G-Cter in SUMO); alternate). Residue K368 forms a Glycyl lysine isopeptide (Lys-Gly) (interchain with G-Cter in SUMO1); alternate linkage. A Glycyl lysine isopeptide (Lys-Gly) (interchain with G-Cter in SUMO2); alternate cross-link involves residue K368. S431 carries the phosphoserine modification. The region spanning 453–521 (NPVSGLLEYA…AVKAMAILLR (69 aa)) is the DRBM 1 domain. Residues 524 to 561 (KAKDSGQPEELSNCPMEEDPEKPAESQPPSSSATSLFS) form a disordered region. Positions 550–561 (QPPSSSATSLFS) are enriched in polar residues. 3 positions are modified to phosphoserine: S564, S579, and S586. Residues 564–632 (SPVTTLLECM…AEEAMKALQE (69 aa)) enclose the DRBM 2 domain. The interval 632 to 652 (EEAANSADDQSGGANTDSLDE) is disordered. Polar residues predominate over residues 638–648 (ADDQSGGANTD). Residues 662–671 (IGELVRYLNT) are N-terminal extension of DRBM 3 and constituent of a bi-partite nuclear localization signal. A DRBM 3 domain is found at 672–740 (NPVGGLLEYA…ADAALRVLIG (69 aa)). The tract at residues 741 to 747 (ESEKAEQ) is C-terminal extension of DRBM 3 and constituent of a bi-partite nuclear localization signal. T754 bears the Phosphothreonine mark. 3 positions are modified to phosphoserine: S760, S769, and S771. K821 participates in a covalent cross-link: Glycyl lysine isopeptide (Lys-Gly) (interchain with G-Cter in SUMO2). The A to I editase domain occupies 832–1167 (SLGTGNRCVK…ISKPQEEKNF (336 aa)). Residue H856 participates in Zn(2+) binding. E858 acts as the Proton donor in catalysis. Residues C912 and C982 each contribute to the Zn(2+) site.

In terms of assembly, homodimer. Homodimerization is essential for its catalytic activity. Isoform 5 can form heterodimers with ADARB1/ADAR2. Isoform 1 interacts with ILF2/NF45 and ILF3/NF90. Binding to ILF3/NF90 up-regulates ILF3-mediated gene expression. Isoform 1 and isoform 5 (via DRBM 3 domain) interact with TNPO1. Isoform 5 (via DRBM domains) interacts with XPO5. Isoform 1 and isoform 5 can interact with EIF2AK2/PKR and UPF1. Sumoylation reduces RNA-editing activity. Detected in brain.

The protein resides in the cytoplasm. Its subcellular location is the nucleus. The enzyme catalyses adenosine in double-stranded RNA + H2O + H(+) = inosine in double-stranded RNA + NH4(+). Its function is as follows. Catalyzes the hydrolytic deamination of adenosine to inosine in double-stranded RNA (dsRNA) referred to as A-to-I RNA editing. This may affect gene expression and function in a number of ways that include mRNA translation by changing codons and hence the amino acid sequence of proteins; pre-mRNA splicing by altering splice site recognition sequences; RNA stability by changing sequences involved in nuclease recognition; genetic stability in the case of RNA virus genomes by changing sequences during viral RNA replication; and RNA structure-dependent activities such as microRNA production or targeting or protein-RNA interactions. Can edit both viral and cellular RNAs and can edit RNAs at multiple sites (hyper-editing) or at specific sites (site-specific editing). Its cellular RNA substrates include: bladder cancer-associated protein (BLCAP), neurotransmitter receptors for glutamate (GRIA2) and serotonin (HTR2C) and GABA receptor (GABRA3). Site-specific RNA editing of transcripts encoding these proteins results in amino acid substitutions which consequently alters their functional activities. Exhibits low-level editing at the GRIA2 Q/R site, but edits efficiently at the R/G site and HOTSPOT1. Does not affect polyomavirus replication but provides protection against virus-induced cytopathic effects. Essential for embryonic development and cell survival and plays a critical role in the maintenance of hematopoietic stem cells. This chain is Double-stranded RNA-specific adenosine deaminase (Adar), found in Rattus norvegicus (Rat).